A 49-amino-acid polypeptide reads, in one-letter code: Protein YdfW (49 aa).

Residues 16-49 form a disordered region; that stretch reads PKADHPWLTRRTQSHQQVKPPKLPKKKPDPDKKD.

In terms of biological role, may be involved in H(2) production during fermentative growth. The protein is Protein YdfW (ydfW) of Escherichia coli (strain K12).